A 765-amino-acid chain; its full sequence is uncharacterized protein (765 aa).

The N-terminal stretch at M1–A22 is a signal peptide. C23 carries N-palmitoyl cysteine lipidation. C23 carries the S-diacylglycerol cysteine lipid modification. Disordered stretches follow at residues E177–A203 and T218–S255. Polar residues predominate over residues T179–R192. Residues S236–G247 show a composition bias toward low complexity.

Belongs to the MG185/MG260 family.

The protein localises to the cell membrane. This is an uncharacterized protein from Mycoplasma genitalium (strain ATCC 33530 / DSM 19775 / NCTC 10195 / G37) (Mycoplasmoides genitalium).